Consider the following 121-residue polypeptide: Small ribosomal subunit protein uS13 (121 aa).

The segment at 92 to 121 is disordered; sequence RKGLPMRGQRTRTNARTRKGPRRAAQALKK.

This sequence belongs to the universal ribosomal protein uS13 family. As to quaternary structure, part of the 30S ribosomal subunit. Forms a loose heterodimer with protein S19. Forms two bridges to the 50S subunit in the 70S ribosome.

In terms of biological role, located at the top of the head of the 30S subunit, it contacts several helices of the 16S rRNA. In the 70S ribosome it contacts the 23S rRNA (bridge B1a) and protein L5 of the 50S subunit (bridge B1b), connecting the 2 subunits; these bridges are implicated in subunit movement. Contacts the tRNAs in the A and P-sites. The polypeptide is Small ribosomal subunit protein uS13 (Burkholderia cenocepacia (strain HI2424)).